The chain runs to 165 residues: MIRIGHGFDVHKFGGVGPLTIGGEKIDYPQGFLAHSDGDVAIHALCDAILGALAMGDIGKHFPDTASEYENIDSRILLRHVVSLAKEQGYVLGNGDVTIVAQAPKMLPHIQAMRSNLASDLNCELSQINVKATTTEKLGFEGRKEGISSHAVVIMNKESMSKTNA.

A divalent metal cation is bound by residues D9 and H11. Residues 9–11 (DVH) and 35–36 (HS) each bind 4-CDP-2-C-methyl-D-erythritol 2-phosphate. A divalent metal cation is bound at residue H43. 4-CDP-2-C-methyl-D-erythritol 2-phosphate contacts are provided by residues 57 to 59 (DIG), 101 to 107 (AQAPKML), 133 to 136 (TTTE), F140, and R143.

Belongs to the IspF family. Homotrimer. A divalent metal cation serves as cofactor.

The enzyme catalyses 4-CDP-2-C-methyl-D-erythritol 2-phosphate = 2-C-methyl-D-erythritol 2,4-cyclic diphosphate + CMP. Its pathway is isoprenoid biosynthesis; isopentenyl diphosphate biosynthesis via DXP pathway; isopentenyl diphosphate from 1-deoxy-D-xylulose 5-phosphate: step 4/6. Its function is as follows. Involved in the biosynthesis of isopentenyl diphosphate (IPP) and dimethylallyl diphosphate (DMAPP), two major building blocks of isoprenoid compounds. Catalyzes the conversion of 4-diphosphocytidyl-2-C-methyl-D-erythritol 2-phosphate (CDP-ME2P) to 2-C-methyl-D-erythritol 2,4-cyclodiphosphate (ME-CPP) with a corresponding release of cytidine 5-monophosphate (CMP). This is 2-C-methyl-D-erythritol 2,4-cyclodiphosphate synthase from Pseudoalteromonas translucida (strain TAC 125).